The chain runs to 1368 residues: DNA-directed RNA polymerase subunit beta (1368 aa).

Belongs to the RNA polymerase beta chain family. As to quaternary structure, the RNAP catalytic core consists of 2 alpha, 1 beta, 1 beta' and 1 omega subunit. When a sigma factor is associated with the core the holoenzyme is formed, which can initiate transcription.

It catalyses the reaction RNA(n) + a ribonucleoside 5'-triphosphate = RNA(n+1) + diphosphate. DNA-dependent RNA polymerase catalyzes the transcription of DNA into RNA using the four ribonucleoside triphosphates as substrates. The polypeptide is DNA-directed RNA polymerase subunit beta (Cupriavidus taiwanensis (strain DSM 17343 / BCRC 17206 / CCUG 44338 / CIP 107171 / LMG 19424 / R1) (Ralstonia taiwanensis (strain LMG 19424))).